Here is a 645-residue protein sequence, read N- to C-terminus: MSVINCEEVKRDEFHTEKYYESYNIFGAHIVTEDEMRGVRFTVWAPHAKAMSVVGDFNEWDYEQHKMLQVTEEGIWSLFIPHIEEREIYKYAIETMAGDVIFKADPYAVYAEVRPNTASVVFDIKGYEWNDKNWSRKKKKKSVYKEAMTVYELHFGSWKKKEDGTLYSYREMAEELIPYVVEHQFTHIEIMPLVEHPYDRSWGYQGTGYYAATSRFGTPYDLMHFVDECHKYGIGVILDWVPGHFCKDAHGLYLFDGTPTYEYKDKDVQENPVWGTVNFDLGKREVRNFLISNALFWMRYFHIDGFRVDAVANMLYWNKEGQEQSNEHAVSFLRELNEAVFAEDEDFLMTAEDSTAWPLVTAPTYEGGLGFNYKWNMGWMNDVLKYMECAPEYRKYIHDKMTFSLLYTYSENFILPLSHDEVVHGKKSLLNKMPGDYWDKFAQLRLLYGYFFTHPGKKLLFMGGEFGQFDEWKDLEDLDWNLHDFEMHRYMHDYFKELIALYKRSKPLWQLDHSREGFQWIDANNNEQSIFSFIRQGDKQEDALVVVCNFTKATYENYKVGVPDFEYYNEILNSDAEQYGGSGQVNKKRLKTIQEPYHNQTAHVEITIPPFGVSILRPVKTRKGSKKQDGSKTKVRSNVTSRGKR.

D309 functions as the Nucleophile in the catalytic mechanism. E352 serves as the catalytic Proton donor. The interval 619 to 645 (VKTRKGSKKQDGSKTKVRSNVTSRGKR) is disordered. Polar residues predominate over residues 636–645 (RSNVTSRGKR).

The protein belongs to the glycosyl hydrolase 13 family. GlgB subfamily. In terms of assembly, monomer.

It catalyses the reaction Transfers a segment of a (1-&gt;4)-alpha-D-glucan chain to a primary hydroxy group in a similar glucan chain.. It functions in the pathway glycan biosynthesis; glycogen biosynthesis. Functionally, catalyzes the formation of the alpha-1,6-glucosidic linkages in glycogen by scission of a 1,4-alpha-linked oligosaccharide from growing alpha-1,4-glucan chains and the subsequent attachment of the oligosaccharide to the alpha-1,6 position. This is 1,4-alpha-glucan branching enzyme GlgB from Bacillus cereus (strain 03BB102).